The chain runs to 585 residues: Arginine--tRNA ligase (585 aa).

The 'HIGH' region motif lies at 131-141; it reads ANPTGPMHVGH.

Belongs to the class-I aminoacyl-tRNA synthetase family. As to quaternary structure, monomer.

It localises to the cytoplasm. It carries out the reaction tRNA(Arg) + L-arginine + ATP = L-arginyl-tRNA(Arg) + AMP + diphosphate. This chain is Arginine--tRNA ligase, found in Rhizobium meliloti (strain 1021) (Ensifer meliloti).